A 262-amino-acid polypeptide reads, in one-letter code: Ornithine carbamoyltransferase (262 aa).

Carbamoyl phosphate is bound by residues 3 to 7 (STRTR), Gln30, Arg54, and 81 to 84 (HPTQ). Residues Asn114, Asp178, and 182-183 (SM) contribute to the L-ornithine site. Carbamoyl phosphate is bound by residues 219–222 (HCLP) and Thr247.

It belongs to the aspartate/ornithine carbamoyltransferase superfamily. OTCase family.

It is found in the cytoplasm. The enzyme catalyses carbamoyl phosphate + L-ornithine = L-citrulline + phosphate + H(+). It functions in the pathway amino-acid biosynthesis; L-arginine biosynthesis; L-arginine from L-ornithine and carbamoyl phosphate: step 1/3. It participates in amino-acid degradation; L-arginine degradation via ADI pathway; carbamoyl phosphate from L-arginine: step 2/2. Functionally, reversibly catalyzes the transfer of the carbamoyl group from carbamoyl phosphate (CP) to the N(epsilon) atom of ornithine (ORN) to produce L-citrulline. This Neisseria meningitidis protein is Ornithine carbamoyltransferase (argF).